Consider the following 297-residue polypeptide: MIDLSTLTTERRNNETFNLDQMTVAEALIKMNNEDKKVAFAVEEALPNIEPVISSAIEAFNKGGRLIYMGAGTSGRLGVLDAAECVPTFGVPATQVIGLIAGGDKAMTVSVEGAEDSLELGRQDLIDLKLNENDLVLGIAASGRTPYVIGALDYAKEIGAKTASLSCNLNAEISKHAEFPIEVDCGPEFLTGSTRLKSGTAQKLILNMISTISMIGIGKVYNNLMVDVKPTNEKLVERSKRIIMQATDCTYEEAEEKFIEADQDVKLAIVMLLTDCAAEEGKTKLVRANGFVKNTLN.

The SIS domain occupies 56 to 219; sequence AIEAFNKGGR…STISMIGIGK (164 aa). The Proton donor role is filled by glutamate 84. Glutamate 115 is an active-site residue.

Belongs to the GCKR-like family. MurNAc-6-P etherase subfamily. In terms of assembly, homodimer.

The catalysed reaction is N-acetyl-D-muramate 6-phosphate + H2O = N-acetyl-D-glucosamine 6-phosphate + (R)-lactate. It functions in the pathway amino-sugar metabolism; N-acetylmuramate degradation. In terms of biological role, specifically catalyzes the cleavage of the D-lactyl ether substituent of MurNAc 6-phosphate, producing GlcNAc 6-phosphate and D-lactate. In Lactococcus lactis subsp. lactis (strain IL1403) (Streptococcus lactis), this protein is N-acetylmuramic acid 6-phosphate etherase.